An 89-amino-acid polypeptide reads, in one-letter code: Small ribosomal subunit protein uS15 (89 aa).

The protein belongs to the universal ribosomal protein uS15 family. Part of the 30S ribosomal subunit. Forms a bridge to the 50S subunit in the 70S ribosome, contacting the 23S rRNA.

Functionally, one of the primary rRNA binding proteins, it binds directly to 16S rRNA where it helps nucleate assembly of the platform of the 30S subunit by binding and bridging several RNA helices of the 16S rRNA. In terms of biological role, forms an intersubunit bridge (bridge B4) with the 23S rRNA of the 50S subunit in the ribosome. This is Small ribosomal subunit protein uS15 from Mycolicibacterium smegmatis (strain ATCC 700084 / mc(2)155) (Mycobacterium smegmatis).